The primary structure comprises 158 residues: Endoribonuclease YbeY (158 aa).

Residues H124, H128, and H134 each coordinate Zn(2+).

It belongs to the endoribonuclease YbeY family. The cofactor is Zn(2+).

It is found in the cytoplasm. Functionally, single strand-specific metallo-endoribonuclease involved in late-stage 70S ribosome quality control and in maturation of the 3' terminus of the 16S rRNA. The polypeptide is Endoribonuclease YbeY (Caldanaerobacter subterraneus subsp. tengcongensis (strain DSM 15242 / JCM 11007 / NBRC 100824 / MB4) (Thermoanaerobacter tengcongensis)).